Here is an 82-residue protein sequence, read N- to C-terminus: SLEIDELARFAVDEHNKKQNALLEFGKVVNTKEQVVAGKMYYITLEATNGGVKKTYEAKVWVKPWENFKELQEFKPVDAATS.

This sequence belongs to the cystatin family.

Its function is as follows. Strong inhibitor of papain and ficin but poor inhibitor of cathepsin H, B and L. The chain is Cysteine proteinase inhibitor A from Helianthus annuus (Common sunflower).